Reading from the N-terminus, the 290-residue chain is 33 kDa chaperonin (290 aa).

Cystine bridges form between C236–C238 and C269–C272.

The protein belongs to the HSP33 family. Post-translationally, under oxidizing conditions two disulfide bonds are formed involving the reactive cysteines. Under reducing conditions zinc is bound to the reactive cysteines and the protein is inactive.

The protein localises to the cytoplasm. Its function is as follows. Redox regulated molecular chaperone. Protects both thermally unfolding and oxidatively damaged proteins from irreversible aggregation. Plays an important role in the bacterial defense system toward oxidative stress. The protein is 33 kDa chaperonin of Brevibacillus brevis (strain 47 / JCM 6285 / NBRC 100599).